The sequence spans 141 residues: MAKKVEKLVKLQIPAGKATPAPPVGPALGQAGINIMGFTKEFNARTADQAGMIIPVVISVYEDKSFDFITKTPPAAVLLKKAAGVEKGSGTPNKTKVATVTRAQVQEIAETKMPDLNAANIEAAMRMIEGTARSMGFTVTD.

The protein belongs to the universal ribosomal protein uL11 family. As to quaternary structure, part of the ribosomal stalk of the 50S ribosomal subunit. Interacts with L10 and the large rRNA to form the base of the stalk. L10 forms an elongated spine to which L12 dimers bind in a sequential fashion forming a multimeric L10(L12)X complex. Post-translationally, one or more lysine residues are methylated.

Its function is as follows. Forms part of the ribosomal stalk which helps the ribosome interact with GTP-bound translation factors. In Streptococcus equi subsp. equi (strain 4047), this protein is Large ribosomal subunit protein uL11.